Here is a 538-residue protein sequence, read N- to C-terminus: Interleukin-21 receptor (538 aa).

The first 19 residues, 1–19 (MPRGWAAPLLLLLLQGGWG), serve as a signal peptide directing secretion. Cystine bridges form between C20–C109, C25–C35, and C65–C81. At 20 to 232 (CPDLVCYTDY…FQTQSEELKE (213 aa)) the chain is on the extracellular side. Fibronectin type-III domains lie at 21–118 (PDLV…AESI) and 119–228 (KPAP…TQSE). Residues N73, N97, N104, N125, and N135 are each glycosylated (N-linked (GlcNAc...) asparagine). W214 carries C-linked (Man) tryptophan glycosylation. Positions 214-218 (WSEWS) match the WSXWS motif motif. The helical transmembrane segment at 233-253 (GWNPHLLLLLLLVIVFIPAFW) threads the bilayer. Residues 254-538 (SLKTHPLWRL…PLSSPGPQAS (285 aa)) are Cytoplasmic-facing. A Box 1 motif motif is present at residues 266–274 (KIWAVPSPE). Disordered stretches follow at residues 342–367 (ESDG…SEER) and 457–487 (EDWA…GLDM).

It belongs to the type I cytokine receptor family. Type 4 subfamily. Heterodimer with the common gamma subunit. Associates with JAK1. C-mannosylated at Trp-214 in the WSXWS motif, the sugar chain makes extensive hydrogen bonds with Asn-73 sugar, and bridges the two fibronectin domains transforming the V-shaped receptor into an A-frame. In terms of tissue distribution, selectively expressed in lymphoid tissues. Most highly expressed in thymus and spleen.

It is found in the membrane. Functionally, this is a receptor for interleukin-21. The protein is Interleukin-21 receptor (IL21R) of Homo sapiens (Human).